The sequence spans 236 residues: Opacity protein opA50 (236 aa).

A signal peptide is located at residue Ala1.

Belongs to the opacity porin family.

It is found in the cell outer membrane. Implicated in a number of adherence functions. OPA proteins are implicated in pathogenesis and are subject to phase variation. The polypeptide is Opacity protein opA50 (opaC) (Neisseria gonorrhoeae).